Reading from the N-terminus, the 213-residue chain is ATP-dependent Clp protease proteolytic subunit 1 (213 aa).

Catalysis depends on Ser-114, which acts as the Nucleophile. The active site involves His-139.

This sequence belongs to the peptidase S14 family. As to quaternary structure, fourteen ClpP subunits assemble into 2 heptameric rings which stack back to back to give a disk-like structure with a central cavity, resembling the structure of eukaryotic proteasomes.

It localises to the cytoplasm. It carries out the reaction Hydrolysis of proteins to small peptides in the presence of ATP and magnesium. alpha-casein is the usual test substrate. In the absence of ATP, only oligopeptides shorter than five residues are hydrolyzed (such as succinyl-Leu-Tyr-|-NHMec, and Leu-Tyr-Leu-|-Tyr-Trp, in which cleavage of the -Tyr-|-Leu- and -Tyr-|-Trp bonds also occurs).. Cleaves peptides in various proteins in a process that requires ATP hydrolysis. Has a chymotrypsin-like activity. Plays a major role in the degradation of misfolded proteins. This is ATP-dependent Clp protease proteolytic subunit 1 from Pseudomonas aeruginosa (strain ATCC 15692 / DSM 22644 / CIP 104116 / JCM 14847 / LMG 12228 / 1C / PRS 101 / PAO1).